We begin with the raw amino-acid sequence, 729 residues long: Phosphoribosylformylglycinamidine synthase subunit PurL (729 aa).

H54 is an active-site residue. Residues Y57 and K96 each contribute to the ATP site. A Mg(2+)-binding site is contributed by E98. Residues S99 to H102 and R121 contribute to the substrate site. The active-site Proton acceptor is H100. D122 serves as a coordination point for Mg(2+). Q245 serves as a coordination point for substrate. D273 lines the Mg(2+) pocket. Residue E317–Q319 coordinates substrate. ATP contacts are provided by D495 and G532. A Mg(2+)-binding site is contributed by N533. S535 lines the substrate pocket.

This sequence belongs to the FGAMS family. As to quaternary structure, monomer. Part of the FGAM synthase complex composed of 1 PurL, 1 PurQ and 2 PurS subunits.

It localises to the cytoplasm. It carries out the reaction N(2)-formyl-N(1)-(5-phospho-beta-D-ribosyl)glycinamide + L-glutamine + ATP + H2O = 2-formamido-N(1)-(5-O-phospho-beta-D-ribosyl)acetamidine + L-glutamate + ADP + phosphate + H(+). It functions in the pathway purine metabolism; IMP biosynthesis via de novo pathway; 5-amino-1-(5-phospho-D-ribosyl)imidazole from N(2)-formyl-N(1)-(5-phospho-D-ribosyl)glycinamide: step 1/2. Part of the phosphoribosylformylglycinamidine synthase complex involved in the purines biosynthetic pathway. Catalyzes the ATP-dependent conversion of formylglycinamide ribonucleotide (FGAR) and glutamine to yield formylglycinamidine ribonucleotide (FGAM) and glutamate. The FGAM synthase complex is composed of three subunits. PurQ produces an ammonia molecule by converting glutamine to glutamate. PurL transfers the ammonia molecule to FGAR to form FGAM in an ATP-dependent manner. PurS interacts with PurQ and PurL and is thought to assist in the transfer of the ammonia molecule from PurQ to PurL. This is Phosphoribosylformylglycinamidine synthase subunit PurL from Staphylococcus aureus (strain USA300).